Consider the following 80-residue polypeptide: MNKALFLCLVVLCAAVVFAAEDLQKAKHAPFKRGAAGAAPCFCPDKVDRGDLWMFRGDCPGGYGYTSDCYVWPNICCYPH.

The signal sequence occupies residues 1–19; that stretch reads MNKALFLCLVVLCAAVVFA. A propeptide spanning residues 20 to 31 is cleaved from the precursor; that stretch reads AEDLQKAKHAPF. 3 disulfides stabilise this stretch: Cys41–Cys76, Cys43–Cys69, and Cys59–Cys77.

Belongs to the sea anemone type 3 (BDS) potassium channel toxin family. Weakly expressed in the ectodermal tissue from the distal and proximal tentacles, body wall, and oral disk.

It localises to the secreted. It is found in the nematocyst. Blocks Kv3 voltage-gated potassium channels. Reduces blood pressure. The sequence is that of Kappa-actitoxin-Avd4i from Anemonia viridis (Snakelocks anemone).